Consider the following 1334-residue polypeptide: Aldehyde oxidase 3 (1334 aa).

The 2Fe-2S ferredoxin-type domain maps to 8–95 (DELIFFVNGK…GAAVTTVEGI (88 aa)). Residues Cys-47, Cys-52, Cys-55, and Cys-77 each coordinate [2Fe-2S] cluster. Gln-116 is a Mo-molybdopterin binding site. Positions 117, 120, 152, and 154 each coordinate [2Fe-2S] cluster. The FAD-binding PCMH-type domain maps to 236–421 (FRGERTTWIA…ISVFVPLSRK (186 aa)). 264–271 (LVIGNTCL) contributes to the FAD binding site. Ser-320 bears the Phosphoserine mark. 4 residues coordinate FAD: Ser-354, His-358, Asp-367, and Leu-411. Mo-molybdopterin contacts are provided by Gly-801, Leu-1042, and Gln-1198. The active-site Proton acceptor; for azaheterocycle hydroxylase activity is the Glu-1265.

The protein belongs to the xanthine dehydrogenase family. In terms of assembly, homodimer. [2Fe-2S] cluster serves as cofactor. FAD is required as a cofactor. It depends on Mo-molybdopterin as a cofactor.

The protein resides in the cytoplasm. The catalysed reaction is an aldehyde + O2 + H2O = a carboxylate + H2O2 + H(+). Its function is as follows. Oxidase with broad substrate specificity, oxidizing aromatic azaheterocycles, such as N1-methylnicotinamide and phthalazine, as well as aldehydes, such as benzaldehyde, retinal and pyridoxal. Plays a key role in the metabolism of xenobiotics and drugs containing aromatic azaheterocyclic substituents. Is probably involved in the regulation of reactive oxygen species homeostasis. Is a prominent source of superoxide generation via the one-electron reduction of molecular oxygen. Also catalyzes nitric oxide (NO) production; under anaerobic conditions, reduces nitrite to NO with NADH or aldehyde as electron donor, but under aerobic conditions, NADH is the preferred substrate. These reactions may be catalyzed by several isozymes. This is Aldehyde oxidase 3 (Aox3) from Rattus norvegicus (Rat).